We begin with the raw amino-acid sequence, 583 residues long: MPGRTWELCLLLLLGLGLGSQEALPPPCESEIYCHGELLNQVQMAKLYQDDKQFVDMPLSIAPEQVLQTFTELSRDHNHSIPREQLQAFVHEHFQAKGQELQPWTPADWKDSPQFLQKISDAKLRAWAGQLHQLWKKLGKKMKPEVLSHPERFSLIYSEHPFIVPGGRFVEFYYWDSYWVMEGLLLSEMAETVKGMLQNFLDLVKTYGHVPNGGRVYYLQRSQPPLLTLMMDCYLTHTNDTAFLQENIETLALELDFWTKNRTVSVSLEGKNYLLNRYYVPYGGPRPESYSKDVELADTLPEGDREALWAELKAGAESGWDFSSRWLIGGPNPNSLSGIRTSKLVPVDLNAFLCQAEELMSNFYSRLGNDSQATKYRILRSQRLAALNTVLWDEQTGAWFDYDLEKKKKNREFYPSNLTPLWAGCFSDPGVADKALKYLEDNRILTYQYGIPTSLQKTGQQWDFPNAWAPLQDLVIRGLAKAPLRRAQEVAFQLAQNWIRTNFDVYSQKSAMYEKYDVSNGGQPGGGGEYEVQEGFGWTNGVVLMLLDRYGDRLTSGAKLAFLEPHCLAATLLPSLLLSLLPW.

An N-terminal signal peptide occupies residues 1–23; it reads MPGRTWELCLLLLLGLGLGSQEA. Residue N78 is glycosylated (N-linked (GlcNAc...) asparagine). Residues R168, 175 to 176, N212, and 221 to 223 contribute to the substrate site; these read WD and RSQ. Residues N239 and N261 are each glycosylated (N-linked (GlcNAc...) asparagine). Substrate contacts are provided by residues 286-288 and G319; that span reads RPE. The active-site Proton donor/acceptor is D321. N-linked (GlcNAc...) asparagine glycosylation is present at N369. E514 functions as the Proton donor/acceptor in the catalytic mechanism. E529 contributes to the substrate binding site. S556 carries GPI-anchor amidated serine lipidation. The propeptide at 557-583 is removed in mature form; sequence GAKLAFLEPHCLAATLLPSLLLSLLPW.

Belongs to the glycosyl hydrolase 37 family. Homodimer; disulfide-linked. Expressed in kidney, liver and small intestine. Also more weakly expressed in pancreas.

The protein resides in the cell membrane. It catalyses the reaction alpha,alpha-trehalose + H2O = alpha-D-glucose + beta-D-glucose. Functionally, intestinal trehalase is probably involved in the hydrolysis of ingested trehalose. In Homo sapiens (Human), this protein is Trehalase.